The sequence spans 828 residues: MEDKNILYESIPTSTNNNELLPLQLIPIKPNITQEEQDLLDNIVKNESIIPMSPKIPININNNNTINNNNNNNSNNVSSGNHITNSNSNSSGNLKDSFDLNSVIDSTCVMTSPIAVSPPIINKLINNKENILNINGILENNINCTNDNQELINILLNKNQLQQQQQQQQQLYLQQQQLQQLQQQIQQIQQQLQQQQQQNSIFRPITPKIIDQQTQPQPQPQTQTTQQPSSQQPFSYEKTPVLASRTISTQKSNSPIPFPNLGTLINDPINSTSSTASNTKSQIPSTPLLVKSTENIQTTPQSNNNDNNDNNNNNNSKNNNNLTDINEDKNNGIEQSSSGNTTTSSITMTAAATTTTTTTTATTATTTTATTTSIKVEPKKKSTSLWSFKTYLYDEIHGGYLSNEANDTLKREQVYNFVHVPWELEKLISFGFLVCFDSFLFLFTFLPIRFFLSFLKFLISPFSKKNKLTTNQIFDLFRGFIWVTCFVFLNFIDSSMLYHYIRGQAVIKLYVIYNVLEVLDKLCCSFGQDIFDSLYWMSFSLTSSNRNRQDGLVPKQRNETRILGPFTHLLVATGYVCLHSLVLFSQVITLNVAINSYNNALLTLMISNQFVELKGSVFKRFEKENLFQISCSDIVERFQAFIFLTIIIFQNLSDLNWDLSWDFAINMLTVVGTVWGSEVLVDAIKHAFITKFNKFSPQMYSKFFVLLSDTIVDPRNRNFTESSWGVNNIIGFVPFPLASIVVRVFHKFIPSKGIFGIFLMVQIYICLVLLKIFIKIIILGQCLSKTTNYDNTTTTILSSSSSSSSSNSLNTTSTTSTSTSTTNDKKNN.

3 stretches are compositionally biased toward low complexity: residues 67-83, 212-233, and 302-321; these read NNNN…GNHI, QQTQ…SQQP, and SNNN…NNNN. 3 disordered regions span residues 67-92, 212-236, and 297-346; these read NNNN…NSSG, QQTQ…PFSY, and QTTP…TSSI. Helical transmembrane passes span 428–448, 472–492, 562–582, 722–742, and 754–774; these read ISFG…FLPI, QIFD…LNFI, ILGP…HSLV, SSWG…SIVV, and IFGI…KIFI. The segment covering 797–822 has biased composition (low complexity); the sequence is LSSSSSSSSSNSLNTTSTTSTSTSTT. The tract at residues 797-828 is disordered; it reads LSSSSSSSSSNSLNTTSTTSTSTSTTNDKKNN.

Belongs to the TAPT1 family.

It is found in the membrane. The polypeptide is Protein TAPT1 homolog (Dictyostelium discoideum (Social amoeba)).